Reading from the N-terminus, the 357-residue chain is Protein-arginine kinase (357 aa).

Residues 24–256 enclose the Phosphagen kinase C-terminal domain; that stretch reads VIISSRVRLA…LQLVTQERAA (233 aa). Residues 27–31, His93, Arg127, 178–182, and 209–214 each bind ATP; these read SSRVR, RASVM, and RGLYGE. The short motif at 339 to 344 is the RDXXRA motif of the pArg binding pocket involved in allosteric regulation element; the sequence is RDIFRA.

This sequence belongs to the ATP:guanido phosphotransferase family.

The enzyme catalyses L-arginyl-[protein] + ATP = N(omega)-phospho-L-arginyl-[protein] + ADP + H(+). Appears to be allosterically activated by the binding of pArg-containing polypeptides to the pArg-binding pocket localized in the C-terminal domain of McsB. In terms of biological role, catalyzes the specific phosphorylation of arginine residues in proteins. This Desulforamulus reducens (strain ATCC BAA-1160 / DSM 100696 / MI-1) (Desulfotomaculum reducens) protein is Protein-arginine kinase.